Here is a 127-residue protein sequence, read N- to C-terminus: MADTHPLVTVETIVLVGLGGFAGSNLRYFVGLFFPGLQGTLLVNVCGSFALGVLVYEGLQVGALASETKLAASTGFISSFTTYSTFAVETVLTPEWAVANVVGSYALGFAGVLVGREVVRLFAGGGQ.

A run of 3 helical transmembrane segments spans residues Pro6–Leu26, Phe29–Phe49, and Glu95–Gly115.

This sequence belongs to the fluoride channel Fluc/FEX (TC 1.A.43) family.

It is found in the cell membrane. The enzyme catalyses fluoride(in) = fluoride(out). Its function is as follows. Fluoride-specific ion channel. Important for reducing fluoride concentration in the cell, thus reducing its toxicity. This chain is Fluoride-specific ion channel FluC 1, found in Haloarcula marismortui (strain ATCC 43049 / DSM 3752 / JCM 8966 / VKM B-1809) (Halobacterium marismortui).